A 295-amino-acid polypeptide reads, in one-letter code: Cyclin-G1 (295 aa).

This sequence belongs to the cyclin family. Cyclin G subfamily.

The protein resides in the nucleus. May play a role in growth regulation. Is associated with G2/M phase arrest in response to DNA damage. May be an intermediate by which p53 mediates its role as an inhibitor of cellular proliferation. This chain is Cyclin-G1 (CCNG1), found in Pongo abelii (Sumatran orangutan).